Reading from the N-terminus, the 156-residue chain is Protein-export protein SecB (156 aa).

It belongs to the SecB family. In terms of assembly, homotetramer, a dimer of dimers. One homotetramer interacts with 1 SecA dimer.

It localises to the cytoplasm. Functionally, one of the proteins required for the normal export of preproteins out of the cell cytoplasm. It is a molecular chaperone that binds to a subset of precursor proteins, maintaining them in a translocation-competent state. It also specifically binds to its receptor SecA. The polypeptide is Protein-export protein SecB (Pectobacterium carotovorum subsp. carotovorum (strain PC1)).